We begin with the raw amino-acid sequence, 245 residues long: Ureidoacrylate amidohydrolase RutB (245 aa).

The active-site Proton acceptor is the aspartate 38. The active site involves lysine 147. Residue cysteine 180 is the Nucleophile of the active site.

Belongs to the isochorismatase family. RutB subfamily.

It carries out the reaction (Z)-3-ureidoacrylate + H2O + H(+) = (Z)-3-aminoacrylate + NH4(+) + CO2. The enzyme catalyses (Z)-3-ureidoacrylate + H2O = (Z)-3-aminoacrylate + carbamate + H(+). The catalysed reaction is (Z)-2-methylureidoacrylate + H2O + H(+) = (Z)-2-methylaminoacrylate + NH4(+) + CO2. Functionally, hydrolyzes ureidoacrylate to form aminoacrylate and carbamate. The carbamate hydrolyzes spontaneously, thereby releasing one of the nitrogen atoms of the pyrimidine ring as ammonia and one of its carbon atoms as CO2. The protein is Ureidoacrylate amidohydrolase RutB of Acinetobacter baylyi (strain ATCC 33305 / BD413 / ADP1).